The following is a 211-amino-acid chain: Peptidyl-prolyl cis-trans isomerase-like 3 (211 aa).

The PPIase cyclophilin-type domain maps to 1 to 204 (MSVTLHTTHG…ETLRINRVTI (204 aa)).

This sequence belongs to the cyclophilin-type PPIase family. PPIL3 subfamily.

The enzyme catalyses [protein]-peptidylproline (omega=180) = [protein]-peptidylproline (omega=0). In terms of biological role, PPIases accelerate the folding of proteins. It catalyzes the cis-trans isomerization of proline imidic peptide bonds in oligopeptides. This is Peptidyl-prolyl cis-trans isomerase-like 3 (cyp10) from Emericella nidulans (strain FGSC A4 / ATCC 38163 / CBS 112.46 / NRRL 194 / M139) (Aspergillus nidulans).